The sequence spans 307 residues: Homoserine kinase (307 aa).

Position 86-96 (86-96 (PIARGLGSSAA)) interacts with ATP.

The protein belongs to the GHMP kinase family. Homoserine kinase subfamily.

The protein resides in the cytoplasm. It catalyses the reaction L-homoserine + ATP = O-phospho-L-homoserine + ADP + H(+). It functions in the pathway amino-acid biosynthesis; L-threonine biosynthesis; L-threonine from L-aspartate: step 4/5. Its function is as follows. Catalyzes the ATP-dependent phosphorylation of L-homoserine to L-homoserine phosphate. In Petrotoga mobilis (strain DSM 10674 / SJ95), this protein is Homoserine kinase.